The chain runs to 169 residues: MADENQTNNGEAAGAQAQQGAQFNIQRIYTKDISFESPNAPAIFTKEWKPEIKLDIDTSTNKLEENVFEVVLSVTVTATLGEETAFLCEVQQAGIFAIGEMPDQNKAHTLGSFCPNMLFPYARETISNLVNRGTFPPLNLAPVNFDAIFAAYVQKRAQQAQGEAPKMDA.

Belongs to the SecB family. In terms of assembly, homotetramer, a dimer of dimers. One homotetramer interacts with 1 SecA dimer.

It localises to the cytoplasm. Its function is as follows. One of the proteins required for the normal export of preproteins out of the cell cytoplasm. It is a molecular chaperone that binds to a subset of precursor proteins, maintaining them in a translocation-competent state. It also specifically binds to its receptor SecA. In Alteromonas mediterranea (strain DSM 17117 / CIP 110805 / LMG 28347 / Deep ecotype), this protein is Protein-export protein SecB.